Consider the following 1023-residue polypeptide: Exportin-T (1023 aa).

It belongs to the exportin family.

It localises to the nucleus. Its subcellular location is the cytoplasm. In terms of biological role, tRNA nucleus export receptor which facilitates tRNA translocation across the nuclear pore complex. Involved in pre-tRNA splicing, probably by affecting the interaction of pre-tRNA with splicing endonuclease. This is Exportin-T (los1) from Botryotinia fuckeliana (strain B05.10) (Noble rot fungus).